Consider the following 697-residue polypeptide: Serine/threonine-protein kinase tousled-like 2 (697 aa).

Disordered stretches follow at residues 25 to 159 and 288 to 316; these read VAKG…SQSE and KLLI…SKSN. Over residues 31–44 the composition is skewed to polar residues; sequence HNESSNQSLCSVGS. The segment covering 46-61 has biased composition (basic and acidic residues); the sequence is SDKELETPEKKSNDQR. Positions 109 to 145 are enriched in polar residues; sequence SSPQHSLSNPPAAVQQGSPSSISSVNTDHSHTSTSHK. Coiled-coil stretches lie at residues 265 to 294 and 336 to 373; these read AFQN…IKKK and KLRL…IHNE. Positions 388–666 constitute a Protein kinase domain; it reads YLLLHLLGRG…VHQLASDPYL (279 aa). Residues 394 to 402 and lysine 417 contribute to the ATP site; that span reads LGRGGFSEV. Aspartate 518 serves as the catalytic Proton acceptor.

The protein belongs to the protein kinase superfamily. Ser/Thr protein kinase family. Monomer. May form homodimers; homodimerization may enhance autophosphoylation and enzymatic activity. Heterodimer with TLK1. The cofactor is Mg(2+). Post-translationally, phosphorylated. Autophosphorylated; phosphorylation promotes the assembly of higher order oligomers and enzymatic activity.

It is found in the nucleus. The protein resides in the nucleoplasm. Its subcellular location is the cytoplasm. It localises to the perinuclear region. The protein localises to the cytoskeleton. The enzyme catalyses L-seryl-[protein] + ATP = O-phospho-L-seryl-[protein] + ADP + H(+). The catalysed reaction is L-threonyl-[protein] + ATP = O-phospho-L-threonyl-[protein] + ADP + H(+). Serine/threonine-protein kinase involved in the process of chromatin assembly and probably also DNA replication, transcription, repair, and chromosome segregation. Negative regulator of amino acid starvation-induced autophagy. The polypeptide is Serine/threonine-protein kinase tousled-like 2 (Danio rerio (Zebrafish)).